We begin with the raw amino-acid sequence, 138 residues long: Large ribosomal subunit protein uL16 (138 aa).

Basic residues predominate over residues 1-15 (MLSPKKVKYRKKQRG). Positions 1–21 (MLSPKKVKYRKKQRGRLSGEA) are disordered.

This sequence belongs to the universal ribosomal protein uL16 family. As to quaternary structure, part of the 50S ribosomal subunit.

Binds 23S rRNA and is also seen to make contacts with the A and possibly P site tRNAs. The protein is Large ribosomal subunit protein uL16 of Borrelia garinii subsp. bavariensis (strain ATCC BAA-2496 / DSM 23469 / PBi) (Borreliella bavariensis).